A 273-amino-acid chain; its full sequence is Undecaprenyl-diphosphatase (273 aa).

Transmembrane regions (helical) follow at residues 13 to 35, 45 to 62, 82 to 102, 108 to 128, 144 to 164, 186 to 206, 219 to 239, and 250 to 270; these read GLVE…VFGN, VFEI…VFEY, FVLN…LFGK, LFNP…ILWV, ALRP…LIPG, TEFS…YDVL, LILI…KALL, and FAYY…SGWI.

It belongs to the UppP family.

It is found in the cell inner membrane. It carries out the reaction di-trans,octa-cis-undecaprenyl diphosphate + H2O = di-trans,octa-cis-undecaprenyl phosphate + phosphate + H(+). Functionally, catalyzes the dephosphorylation of undecaprenyl diphosphate (UPP). Confers resistance to bacitracin. The protein is Undecaprenyl-diphosphatase of Neisseria meningitidis serogroup C (strain 053442).